A 245-amino-acid polypeptide reads, in one-letter code: Dehydrogenase/reductase SDR family member 6 (245 aa).

Residues Q16–I18, D37, and D58 each bind NAD(+). R144 is a substrate binding site. Residue Y147 is the Proton acceptor of the active site. NAD(+)-binding positions include K151 and V180–S184. 2 residues coordinate substrate: R188 and R205.

The protein belongs to the short-chain dehydrogenases/reductases (SDR) family. Homotetramer. Detected in liver, spleen and macrophages. Widely expressed.

It localises to the cytoplasm. It carries out the reaction cis-4-hydroxy-L-proline + NAD(+) = 4-oxo-L-proline + NADH + H(+). The catalysed reaction is (R)-3-hydroxybutanoate + NAD(+) = acetoacetate + NADH + H(+). The protein operates within amino-acid metabolism. It participates in siderophore biosynthesis. Functionally, NAD(H)-dependent dehydrogenase/reductase with a preference for cyclic substrates. Catalyzes stereoselective conversion of 4-oxo-L-proline to cis-4-hydroxy-L-proline, likely a detoxification mechanism for ketoprolines. Mediates the formation of 2,5-dihydroxybenzoate (2,5-DHBA), a siderophore that chelates free cytoplasmic iron and associates with LCN2, thereby regulating iron transport and homeostasis while protecting cells against free radical-induced oxidative stress. The iron-siderophore complex is imported into mitochondria, providing an iron source for mitochondrial metabolic processes in particular heme synthesis. May act as a 3-hydroxybutyrate dehydrogenase. Its function is as follows. (Microbial infection) May play a role in susceptibility to bacterial infection by providing an assimilable source of iron that is exploited by pathogenic bacteria. Host iron-siderophore complexes can be used by bacteria to promote their own growth and pathogenicity. This chain is Dehydrogenase/reductase SDR family member 6, found in Mus musculus (Mouse).